Reading from the N-terminus, the 361-residue chain is Zygote arrest protein 1 (361 aa).

3 disordered regions span residues methionine 1 to glycine 23, glutamine 98 to tryptophan 128, and valine 148 to lysine 252. Threonine 154 carries the post-translational modification Phosphothreonine; by CDK1. At serine 161 the chain carries Phosphoserine; by CDK1. Basic and acidic residues predominate over residues arginine 168–alanine 177. The 3CxxC-type zinc finger occupies lysine 263 to aspartate 346.

This sequence belongs to the ZAR1 family. As to quaternary structure, interacts with YBX2. Post-translationally, phosphorylation by CDK1 does not regulate formation of MARDO (mitochondria-associated ribonucleoprotein domain) membraneless compartment. In terms of processing, ubiquitinated and degradaded by the proteasome during oocyte meiotic maturation, leading to MARDO (mitochondria-associated ribonucleoprotein domain) membraneless compartment dissolution. As to expression, ovary. Expressed in primary oocytes (from primary through antral follicle stages) and during the progression from Meiosis I to Meiosis II. The mRNA is detected in growing oocytes (early primary follicle, type 3a) through fully grown oocytes (antral follicle, type 8).

It is found in the cytoplasm. Its subcellular location is the cytoplasmic ribonucleoprotein granule. MRNA-binding protein that mediates formation of MARDO (mitochondria-associated ribonucleoprotein domain), a membraneless compartment that stores maternal mRNAs in oocytes. MARDO assembly around mitochondria is directed by an increase in mitochondrial membrane potential during oocyte growth. Promotes formation of MARDO phase-separated membraneless compartment by undergoing liquid-liquid phase separation upon binding to maternal mRNAs. Binds to the 3'-UTR of maternal mRNAs. Maternal mRNAs stored in the MARDO are translationally repressed. Essential for female fertility and oocyte-to-embryo transition by coordinating maternal mRNA storage, translation and degradation. The polypeptide is Zygote arrest protein 1 (Mus musculus (Mouse)).